The sequence spans 81 residues: Sulfur carrier protein TusA (81 aa).

C19 acts as the Cysteine persulfide intermediate in catalysis.

Belongs to the sulfur carrier protein TusA family.

It localises to the cytoplasm. In terms of biological role, sulfur carrier protein which probably makes part of a sulfur-relay system. The protein is Sulfur carrier protein TusA of Shewanella piezotolerans (strain WP3 / JCM 13877).